The chain runs to 838 residues: MPLSYQHFRKLLLLDDGTEAGPLEEELPRLADADLNRRVAEDLNLGNLNVSIPWTHKVGNFTGLYSSTVPIFNPEWQTPSFPKIHLQEDIINRCQQFVGPLTVNEKRRLKLIMPARFYPTHTKYLPLDKGIKPYYPDQVVNHYFQTRHYLHTLWKAGILYKRETTRSASFCGSPYSWEQELQHSQRHGDESFCSQPSGIPSRSSVGPCIRSQLNKSRLGLQPHQGPLASSQPGRSGSIRARAHPSTRRYFGVEPSGSGHIDHSVNNSSSCLHQSAVRKAAYSHLSTSKRQSSSGHAVEFHCLAPSSAGSQSQGSVSSCWWLQFRNSKPCSEYCLSHLVNLREDWGPCDDHGEHHIRIPRTPARVTGGVFLVDKNPHNTAESRLVVDFSQFSRGITRVSWPKFAVPNLQSLTNLLSSNLSWLSLDVSAAFYHIPLHPAAMPHLLIGSSGLSRYVARLSSNSRINNNQYGTMQNLHDSCSRQLFVSLMLLYKTYGWKLHLYSHPIVLGFRKIPMGVGLSPFLLAQFTSAICSVVRRAFPHCLAFSYMDDVVLGAKSVQHRESLYTAVTNFLLSLGIHLNPNKTKRWGYSLNFMGYIIGSWGTLPQDHIVQKIKHCFRKLPVNRPIDWKVCQRIVGLLGFAAPFTQCGYPALMPLYACIQAKQAFTFSPTYKAFLSKQYMNLYPVARQRPGLCQVFADATPTGWGLAIGHQRMRGTFVAPLPIHTAELLAACFARSRSGAKLIGTDNSVVLSRKYTSFPWLLGCTANWILRGTSFVYVPSALNPADDPSRGRLGLSRPLLRLPFQPTTGRTSLYAVSPSVPSHLPVRVHFASPLHVAWRPP.

The segment at 1–179 (MPLSYQHFRK…FCGSPYSWEQ (179 aa)) is terminal protein domain (TP). The tract at residues 180 to 341 (ELQHSQRHGD…YCLSHLVNLR (162 aa)) is spacer. The interval 219–245 (GLQPHQGPLASSQPGRSGSIRARAHPS) is disordered. Residues 342-685 (EDWGPCDDHG…YMNLYPVARQ (344 aa)) form a polymerase/reverse transcriptase domain (RT) region. The 244-residue stretch at 352 to 595 (EHHIRIPRTP…YSLNFMGYII (244 aa)) folds into the Reverse transcriptase domain. Asp-424, Asp-546, and Asp-547 together coordinate Mg(2+).

It belongs to the hepadnaviridae P protein family.

It catalyses the reaction DNA(n) + a 2'-deoxyribonucleoside 5'-triphosphate = DNA(n+1) + diphosphate. The enzyme catalyses Endonucleolytic cleavage to 5'-phosphomonoester.. With respect to regulation, activated by host HSP70 and HSP40 in vitro to be able to bind the epsilon loop of the pgRNA. Because deletion of the RNase H region renders the protein partly chaperone-independent, the chaperones may be needed indirectly to relieve occlusion of the RNA-binding site by this domain. Inhibited by several reverse-transcriptase inhibitors: Lamivudine, Adefovir and Entecavir. Functionally, multifunctional enzyme that converts the viral RNA genome into dsDNA in viral cytoplasmic capsids. This enzyme displays a DNA polymerase activity that can copy either DNA or RNA templates, and a ribonuclease H (RNase H) activity that cleaves the RNA strand of RNA-DNA heteroduplexes in a partially processive 3'- to 5'-endonucleasic mode. Neo-synthesized pregenomic RNA (pgRNA) are encapsidated together with the P protein, and reverse-transcribed inside the nucleocapsid. Initiation of reverse-transcription occurs first by binding the epsilon loop on the pgRNA genome, and is initiated by protein priming, thereby the 5'-end of (-)DNA is covalently linked to P protein. Partial (+)DNA is synthesized from the (-)DNA template and generates the relaxed circular DNA (RC-DNA) genome. After budding and infection, the RC-DNA migrates in the nucleus, and is converted into a plasmid-like covalently closed circular DNA (cccDNA). The activity of P protein does not seem to be necessary for cccDNA generation, and is presumably released from (+)DNA by host nuclear DNA repair machinery. This is Protein P from Hepatitis B virus genotype A2 subtype adw (isolate Japan/Nishioka/1983) (HBV-A).